We begin with the raw amino-acid sequence, 338 residues long: 1-aminocyclopropane-1-carboxylate deaminase (338 aa).

Position 51 is an N6-(pyridoxal phosphate)lysine (K51). The active-site Nucleophile is the S78.

The protein belongs to the ACC deaminase/D-cysteine desulfhydrase family. As to quaternary structure, homotrimer. Requires pyridoxal 5'-phosphate as cofactor.

It catalyses the reaction 1-aminocyclopropane-1-carboxylate + H2O = 2-oxobutanoate + NH4(+). In terms of biological role, catalyzes a cyclopropane ring-opening reaction, the irreversible conversion of 1-aminocyclopropane-1-carboxylate (ACC) to ammonia and alpha-ketobutyrate. Allows growth on ACC as a nitrogen source. This chain is 1-aminocyclopropane-1-carboxylate deaminase, found in Paraburkholderia phytofirmans (strain DSM 17436 / LMG 22146 / PsJN) (Burkholderia phytofirmans).